The primary structure comprises 193 residues: Putative manganese efflux pump MntP (193 aa).

6 consecutive transmembrane segments (helical) span residues 3 to 23, 41 to 61, 69 to 89, 107 to 127, 130 to 150, and 164 to 184; these read IFAVFLLAIALSMDAFAVAVV, AAFGFFQFAMPVIGWWLGVSV, DHWIAFVLLGWIGGKMALSGL, AGRNLVVLGVATSIDALAVGL, AILGTPIWADAAIIGIVCAVI, and LCALNGWAELAGGLTLLAIAC.

It belongs to the MntP (TC 9.B.29) family.

The protein localises to the cell inner membrane. In terms of biological role, probably functions as a manganese efflux pump. This is Putative manganese efflux pump MntP from Desulfovibrio desulfuricans (strain ATCC 27774 / DSM 6949 / MB).